Consider the following 54-residue polypeptide: Large ribosomal subunit protein bL32c (54 aa).

Residues 1 to 20 (MAVPKKRVSKSKRDMRKTTW) are compositionally biased toward basic residues. The segment at 1–54 (MAVPKKRVSKSKRDMRKTTWKNKASKEAKKALSLAKSVSTGKSKSKGFQIKSSN) is disordered. Residues 31–42 (ALSLAKSVSTGK) are compositionally biased toward low complexity.

It belongs to the bacterial ribosomal protein bL32 family.

The protein localises to the plastid. Its subcellular location is the chloroplast. In Chlorokybus atmophyticus (Soil alga), this protein is Large ribosomal subunit protein bL32c.